The primary structure comprises 718 residues: Putative aminodeoxychorismate synthase (718 aa).

The Glutamine amidotransferase type-1 domain maps to 9 to 203; that stretch reads QILLIDCYDS…LSLADTPNIQ (195 aa). Residue C88 is the Nucleophile of the active site. Residues H177 and E179 contribute to the active site. The segment at 266 to 718 is PABB component; that stretch reads FLDSAKKPGR…NLKNKKRSCK (453 aa).

The protein in the C-terminal section; belongs to the anthranilate synthase component I family.

It localises to the cytoplasm. It is found in the nucleus. It carries out the reaction chorismate + L-glutamine = 4-amino-4-deoxychorismate + L-glutamate. It functions in the pathway cofactor biosynthesis; tetrahydrofolate biosynthesis; 4-aminobenzoate from chorismate: step 1/2. Its function is as follows. Catalyzes the biosynthesis of 4-amino-4-deoxychorismate (ADC) from chorismate and glutamine. Required for the synthesis of 4-aminobenzoate (PABA), an important component in tetrahydrofolate biosynthesis. This chain is Putative aminodeoxychorismate synthase, found in Schizosaccharomyces pombe (strain 972 / ATCC 24843) (Fission yeast).